The primary structure comprises 177 residues: Protein OPG036 (177 aa).

Belongs to the poxviridae OPG036 family.

The protein resides in the host nucleus. Functionally, plays a role in the inhibition of host innate immune response. Within the host nucleus, inhibits activation of interferon-beta promoter by inhibiting IRF3 activation. This chain is Protein OPG036 (OPG036), found in Homo sapiens (Human).